Here is a 365-residue protein sequence, read N- to C-terminus: Probable UDP-arabinopyranose mutase 1 (365 aa).

Positions 100-102 (DDD) match the DXD motif motif. N-linked (Glc...) arginine glycosylation is present at arginine 148.

It belongs to the RGP family. Homopentamer or homohexamer. Mn(2+) serves as cofactor. The cofactor is Mg(2+). Post-translationally, reversibly glycosylated by UDP-glucose, UDP-xylose and UDP-galactose, but not UDP-mannose. As to expression, expressed in all tissues tested, including root, tuber, leaf, petiole, shoot, stolon and stem.

It localises to the secreted. Its subcellular location is the cell wall. The protein resides in the cell junction. The protein localises to the plasmodesma. It is found in the golgi apparatus. It carries out the reaction UDP-beta-L-arabinofuranose = UDP-beta-L-arabinopyranose. Probable UDP-L-arabinose mutase involved in the biosynthesis of cell wall non-cellulosic polysaccharides. Was initially shown to possess an autoglycosylating activity which is dependent on the presence of UDP-glucose and manganese. The chain is Probable UDP-arabinopyranose mutase 1 from Solanum tuberosum (Potato).